A 449-amino-acid polypeptide reads, in one-letter code: Elongation factor 1-alpha (449 aa).

The 226-residue stretch at 5-230 folds into the tr-type G domain; the sequence is KVHINIVVIG…DQINEPKRPS (226 aa). Residues 14 to 21 are G1; sequence GHVDSGKS. Position 14-21 (14-21) interacts with GTP; that stretch reads GHVDSGKS. Lysine 55 bears the N6,N6-dimethyllysine mark. The interval 70 to 74 is G2; it reads GITID. At lysine 79 the chain carries N6,N6,N6-trimethyllysine. The G3 stretch occupies residues 91–94; sequence DAPG. Residues 91 to 95 and 153 to 156 contribute to the GTP site; these read DAPGH and NKMD. Residues 153 to 156 form a G4 region; it reads NKMD. N6,N6,N6-trimethyllysine is present on lysine 187. The segment at 194–196 is G5; it reads SGF. An N6-methyllysine modification is found at lysine 261. The residue at position 289 (glutamate 289) is a 5-glutamyl glycerylphosphorylethanolamine. Lysine 306 carries the N6,N6,N6-trimethyllysine modification. At glutamate 362 the chain carries 5-glutamyl glycerylphosphorylethanolamine. Lysine 396 is modified (N6,N6,N6-trimethyllysine).

Belongs to the TRAFAC class translation factor GTPase superfamily. Classic translation factor GTPase family. EF-Tu/EF-1A subfamily.

The protein localises to the cytoplasm. In terms of biological role, this protein promotes the GTP-dependent binding of aminoacyl-tRNA to the A-site of ribosomes during protein biosynthesis. This Daucus carota (Wild carrot) protein is Elongation factor 1-alpha.